Here is a 565-residue protein sequence, read N- to C-terminus: Proline--tRNA ligase (565 aa).

The protein belongs to the class-II aminoacyl-tRNA synthetase family. ProS type 1 subfamily. In terms of assembly, homodimer.

The protein resides in the cytoplasm. It carries out the reaction tRNA(Pro) + L-proline + ATP = L-prolyl-tRNA(Pro) + AMP + diphosphate. Its function is as follows. Catalyzes the attachment of proline to tRNA(Pro) in a two-step reaction: proline is first activated by ATP to form Pro-AMP and then transferred to the acceptor end of tRNA(Pro). As ProRS can inadvertently accommodate and process non-cognate amino acids such as alanine and cysteine, to avoid such errors it has two additional distinct editing activities against alanine. One activity is designated as 'pretransfer' editing and involves the tRNA(Pro)-independent hydrolysis of activated Ala-AMP. The other activity is designated 'posttransfer' editing and involves deacylation of mischarged Ala-tRNA(Pro). The misacylated Cys-tRNA(Pro) is not edited by ProRS. This Lactobacillus gasseri (strain ATCC 33323 / DSM 20243 / BCRC 14619 / CIP 102991 / JCM 1131 / KCTC 3163 / NCIMB 11718 / NCTC 13722 / AM63) protein is Proline--tRNA ligase.